Consider the following 400-residue polypeptide: MADFIRTQIFGTCFEITSRYVDLNPVGMGAFGLVCSARDQLTNQNVAIKKIMKPFSTPVLAKRTYRELKLLKHLRHENLITLSDIFISPLEDIYFVTELLGTDLHRLLTSRPLEHQFIQYFLYQILRGLKYVHSAGVVHRDLKPSNILINENCDLKICDFGLARIQDPQMTGYVSTRYYRAPEIMLTWQKYDVEVDIWSAGCIFAEMLRGKPLFPGKDHVHQFSIITELLGNPPDDVIETIGSENTLNFVKSLPKRERIPLSQKFPNADPDAVDLLEKMLVFDPRKRINAADALAHPYLAPYHEPSDEPVASEKFDWSFNDADLPVDTWKVMMYSEILDFHNVDSSAVEQQQQQPQPPQPQLQQQQQPPQQPQQPQQPQXAQQPVQPVQGDYVPQVAPRS.

Residues 20–299 enclose the Protein kinase domain; sequence YVDLNPVGMG…AADALAHPYL (280 aa). ATP contacts are provided by residues 26 to 34 and Lys49; that span reads VGMGAFGLV. Asp141 (proton acceptor) is an active-site residue. Position 171 is a phosphothreonine (Thr171). The TXY signature appears at 171–173; the sequence is TGY. The residue at position 173 (Tyr173) is a Phosphotyrosine. The interval 345–400 is disordered; it reads SSAVEQQQQQPQPPQPQLQQQQQPPQQPQQPQQPQXAQQPVQPVQGDYVPQVAPRS. The span at 361–389 shows a compositional bias: low complexity; the sequence is QLQQQQQPPQQPQQPQQPQXAQQPVQPVQ.

This sequence belongs to the protein kinase superfamily. Ser/Thr protein kinase family. MAP kinase subfamily. HOG1 sub-subfamily. Mg(2+) is required as a cofactor. Dually phosphorylated on Thr-171 and Tyr-173, which activates the enzyme. Phosphorylation is induced by osmotic stress.

Its subcellular location is the cytoplasm. The protein localises to the nucleus. It carries out the reaction L-seryl-[protein] + ATP = O-phospho-L-seryl-[protein] + ADP + H(+). The enzyme catalyses L-threonyl-[protein] + ATP = O-phospho-L-threonyl-[protein] + ADP + H(+). Activated by tyrosine and threonine phosphorylation. Functionally, proline-directed serine/threonine-protein kinase involved in a signal transduction pathway that is activated by changes in the osmolarity of the extracellular environment. Controls osmotic regulation of transcription of target genes. The polypeptide is Mitogen-activated protein kinase hog1 (hog1) (Blastobotrys adeninivorans (Yeast)).